Reading from the N-terminus, the 721-residue chain is Polyribonucleotide nucleotidyltransferase (721 aa).

Mg(2+) is bound by residues aspartate 495 and aspartate 501. Positions 562–621 constitute a KH domain; sequence PRLLSFRIDPELIGTVIGPGGRTIKGITERTNTKIDIEDSGIVTIASHDGAAAEEAQKII. The region spanning 631 to 699 is the S1 motif domain; that stretch reads GEMFSGSITR…NRGRINLTLR (69 aa). Residues 700–721 form a disordered region; that stretch reads GVPQSGESTEVEPQPTPVAPLS.

It belongs to the polyribonucleotide nucleotidyltransferase family. Mg(2+) serves as cofactor.

It localises to the cytoplasm. The enzyme catalyses RNA(n+1) + phosphate = RNA(n) + a ribonucleoside 5'-diphosphate. Functionally, involved in mRNA degradation. Catalyzes the phosphorolysis of single-stranded polyribonucleotides processively in the 3'- to 5'-direction. This Synechococcus sp. (strain CC9902) protein is Polyribonucleotide nucleotidyltransferase.